Consider the following 490-residue polypeptide: Gallate decarboxylase (490 aa).

Position 165 (D165) interacts with Mn(2+). Prenylated FMN is bound by residues I168–R170 and G187. E233 serves as a coordination point for Mn(2+). The Proton acceptor role is filled by E289.

Belongs to the UbiD family. Prenylated FMN is required as a cofactor. Requires Mn(2+) as cofactor.

It carries out the reaction 3,4,5-trihydroxybenzoate + H(+) = 1,2,3-trihydroxybenzene + CO2. The catalysed reaction is 3,4-dihydroxybenzoate + H(+) = catechol + CO2. Functionally, involved in tannin degradation. Catalyzes the decarboxylation of gallic acid and protocatechuic acid to pyrogallol and catechol, respectively. The chain is Gallate decarboxylase from Lactiplantibacillus plantarum (strain ATCC BAA-793 / NCIMB 8826 / WCFS1) (Lactobacillus plantarum).